Here is a 214-residue protein sequence, read N- to C-terminus: MSSKVTSQHAEELSTGARTLGVNLTGTQHELLLGYLALLIKWNQAYNLTAVRDPDEMVSRHLLDSLSVMSFIENGRWLDVGSGGGMPGIPLAILYPDSQVTCLDSNGKKTRFLTQVKLELKLDNLQVIHSRVEAFQPAQPFNGIISRAFSSMENFTNWTRHLGDADTRWLAMKGVHPADELVALPADFKLDSEHALAVPGCQGQRHLLILRRTA.

Residues Gly81, Met86, 132–133 (VE), and Arg147 contribute to the S-adenosyl-L-methionine site.

The protein belongs to the methyltransferase superfamily. RNA methyltransferase RsmG family.

The protein resides in the cytoplasm. The catalysed reaction is guanosine(527) in 16S rRNA + S-adenosyl-L-methionine = N(7)-methylguanosine(527) in 16S rRNA + S-adenosyl-L-homocysteine. Specifically methylates the N7 position of guanine in position 527 of 16S rRNA. The sequence is that of Ribosomal RNA small subunit methyltransferase G from Pseudomonas fluorescens (strain Pf0-1).